A 535-amino-acid polypeptide reads, in one-letter code: UDP-glucuronosyltransferase 1A1 (535 aa).

The N-terminal stretch at 1-29 (MTVVCWSSRLLLLLPYLLLCVFGPSASHA) is a signal peptide. Residues Asn89, Asn297, and Asn435 are each glycosylated (N-linked (GlcNAc...) asparagine). The chain crosses the membrane as a helical span at residues 493–509 (VIGFLLAIVLTVVFIVF).

This sequence belongs to the UDP-glycosyltransferase family. In terms of assembly, homodimers. Homooligomer. Interacts with UGT1A3, UGT1A4, UGT1A6, UGT1A7, UGT1A8, UGT1A9 and UGT1A10 to form heterodimers. In terms of tissue distribution, highly expressed in liver and at lower levels in colon, kidney, stomach and intestine.

It localises to the endoplasmic reticulum membrane. The catalysed reaction is glucuronate acceptor + UDP-alpha-D-glucuronate = acceptor beta-D-glucuronoside + UDP + H(+). The enzyme catalyses 17beta-estradiol + UDP-alpha-D-glucuronate = 17beta-estradiol 3-O-(beta-D-glucuronate) + UDP + H(+). It carries out the reaction 2-hydroxyestrone + UDP-alpha-D-glucuronate = 2-hydroxyestrone 3-O-(beta-D-glucuronate) + UDP + H(+). It catalyses the reaction 2-hydroxy-17beta-estradiol + UDP-alpha-D-glucuronate = 2-hydroxy-17beta-estradiol 3-O-(beta-D-glucuronate) + UDP + H(+). The catalysed reaction is 2-methoxy-17beta-estradiol + UDP-alpha-D-glucuronate = 2-methoxy-17beta-estradiol 3-O-(beta-D-glucuronate) + UDP + H(+). The enzyme catalyses 17alpha-estradiol + UDP-alpha-D-glucuronate = 17alpha-estradiol 3-O-(beta-D-glucuronate) + UDP + H(+). It carries out the reaction 16beta,17beta-estriol + UDP-alpha-D-glucuronate = 16beta,17beta-estriol 16-O-(beta-D-glucuronate) + UDP + H(+). It catalyses the reaction losartan + UDP-alpha-D-glucuronate = losartan-2-N-beta-D-glucuronide + UDP. The catalysed reaction is prunetin + UDP-alpha-D-glucuronate = prunetin-4'-O-beta-D-glucuronide + UDP. The enzyme catalyses SN-38 + UDP-alpha-D-glucuronate = SN-38 O-beta-D-glucuronide + UDP + H(+). It carries out the reaction (4Z,15Z)-bilirubin IXalpha + UDP-alpha-D-glucuronate = (4Z,15Z)-bilirubin IXalpha C12-beta-D-glucuronoside + UDP. It catalyses the reaction (4Z,15Z)-bilirubin IXalpha + UDP-alpha-D-glucuronate = (4Z,15Z)-bilirubin IXalpha C8-beta-D-glucuronoside + UDP. The catalysed reaction is (4Z,15Z)-bilirubin IXalpha C8-beta-D-glucuronoside + UDP-alpha-D-glucuronate = (4Z,15Z)-bilirubin IXalpha C8,C12-beta-D-bisglucuronoside + UDP. The enzyme catalyses (4Z,15Z)-bilirubin IXalpha C12-beta-D-glucuronoside + UDP-alpha-D-glucuronate = (4Z,15Z)-bilirubin IXalpha C8,C12-beta-D-bisglucuronoside + UDP. It carries out the reaction 8-iso-prostaglandin F2alpha + UDP-alpha-D-glucuronate = 8-iso-prostaglandin F2alpha-glucuronide + UDP + H(+). It catalyses the reaction (5Z,8Z,11Z,14Z)-eicosatetraenoate + UDP-alpha-D-glucuronate = O-[(5Z),(8Z),(11Z),(14Z)-eicosatetraenoyl]-beta-D-glucuronate + UDP. The catalysed reaction is 15-hydroxy-(5Z,8Z,11Z,13E)-eicosatetraenoate + UDP-alpha-D-glucuronate = 15-O-(beta-D-glucuronosyl)-(5Z,8Z,11Z,14Z)-eicosatetraenoate + UDP + H(+). The enzyme catalyses 20-hydroxy-(5Z,8Z,11Z,14Z)-eicosatetraenoate + UDP-alpha-D-glucuronate = 20-O-(beta-D-glucuronosyl)-(5Z,8Z,11Z,14Z)-eicosatetraenoate + UDP + H(+). It carries out the reaction prostaglandin B1 + UDP-alpha-D-glucuronate = 15-O-(beta-D-glucuronosyl)-prostaglandin B1 + UDP + H(+). It catalyses the reaction (E)-ferulate + UDP-alpha-D-glucuronate = (E)-4-O-(beta-D-glucuronosyl)-ferulate + UDP + H(+). The catalysed reaction is (E)-ferulate + UDP-alpha-D-glucuronate = (E)-ferulic acid beta-D-glucuronate ester + UDP. Its function is as follows. UDP-glucuronosyltransferase (UGT) that catalyzes phase II biotransformation reactions in which lipophilic substrates are conjugated with glucuronic acid to increase the metabolite's water solubility, thereby facilitating excretion into either the urine or bile. Essential for the elimination and detoxification of drugs, xenobiotics and endogenous compounds. Catalyzes the glucuronidation of endogenous estrogen hormones such as estradiol, estrone and estriol. Involved in the glucuronidation of bilirubin, a degradation product occurring in the normal catabolic pathway that breaks down heme in vertebrates. Involved in the glucuronidation of arachidonic acid (AA) and AA-derived eicosanoids including 15-HETE, 20-HETE, PGB1 and F2-isoprostane (8-iso-PGF2alpha). Involved in the glucuronidation of the phytochemical ferulic acid at the phenolic or the carboxylic acid group. Also catalyzes the glucuronidation the isoflavones genistein, daidzein, glycitein, formononetin, biochanin A and prunetin, which are phytoestrogens with anticancer and cardiovascular properties. Involved in the glucuronidation of the AGTR1 angiotensin receptor antagonist losartan, a drug which can inhibit the effect of angiotensin II. Involved in the biotransformation of 7-ethyl-10-hydroxycamptothecin (SN-38), the pharmacologically active metabolite of the anticancer drug irinotecan. This Mus musculus (Mouse) protein is UDP-glucuronosyltransferase 1A1.